Consider the following 1736-residue polypeptide: Centrosomal protein of 152 kDa (1736 aa).

Residues 1-60 (MSLEFGSVALQTQNEDEEFDKEDFEREKELQQLLTDLPHDMLDDELSSPERHDSDCSMDG) form an interaction with PLK4 region. The interval 1–127 (MSLEFGSVAL…SGYSPPGKRE (127 aa)) is disordered. 2 stretches are compositionally biased toward basic and acidic residues: residues 61–82 (RAAEPHPSEHLERKWIERDILP) and 94–105 (EENRSKTEDQHL). Coiled coils occupy residues 228–481 (IIQL…AELG), 552–651 (HLVS…QEFD), 692–776 (LEVY…TERQ), 835–868 (AAVSKAEAAAVLAEEQARQVQQEKELATKEALRK), 950–1075 (NVMS…YEED), and 1205–1315 (GHCF…KIKR). Residues 571-592 (FQQSKDGDSGMETKTDTSEKTT) are disordered. Positions 575-592 (KDGDSGMETKTDTSEKTT) are enriched in basic and acidic residues. T1277 is modified (phosphothreonine). 4 disordered regions span residues 1416-1479 (GTER…ASTA), 1543-1562 (EKNSSPRCISESRHTTLRSP), 1574-1614 (GSPT…SDST), and 1677-1736 (QQGK…SPLE). The segment covering 1462–1473 (RRLEESKHREMR) has biased composition (basic and acidic residues). 2 stretches are compositionally biased toward polar residues: residues 1576 to 1595 (PTETDSIASEKSQGVGSQDS) and 1603 to 1614 (PSSSPAWPSDST). N6-acetyllysine is present on K1714.

The protein belongs to the CEP152 family. In terms of assembly, interacts (via N-terminus) with PLK4; the interaction is mutally exclusive with a PLK4:CEP192 interaction. Interacts (via C-terminus) with CPAP (via-N-terminus). Interacts with CINP. Interacts with CDK5RAP2, WDR62, CEP63 and CEP131. CEP63, CDK5RAP2, CEP152, WDR62 are proposed to form a stepwise assembled complex at the centrosome forming a ring near parental centrioles. Interacts with DEUP1; this interaction recruits CEP152 to the deuterosome. The interactions with CEP63 and DEUP1 are mutually exclusive. Interacts with CCDC66.

The protein localises to the cytoplasm. It localises to the cytoskeleton. The protein resides in the microtubule organizing center. Its subcellular location is the centrosome. It is found in the centriole. Functionally, necessary for centrosome duplication; the function also seems to involve CEP63, CDK5RAP2 and WDR62 through a stepwise assembled complex at the centrosome that recruits CDK2 required for centriole duplication. Acts as a molecular scaffold facilitating the interaction of PLK4 and CPAP, 2 molecules involved in centriole formation. Proposed to snatch PLK4 away from PLK4:CEP92 complexes in early G1 daughter centriole and to reposition PLK4 at the outer boundary of a newly forming CEP152 ring structure. Also plays a key role in deuterosome-mediated centriole amplification in multiciliated that can generate more than 100 centrioles. Overexpression of cep152 can drive amplification of centrioles. In Mus musculus (Mouse), this protein is Centrosomal protein of 152 kDa (Cep152).